The chain runs to 138 residues: ER-derived vesicles protein ERV14 (138 aa).

Residues 2 to 6 lie on the Cytoplasmic side of the membrane; it reads GAWLF. The helical transmembrane segment at 7–27 threads the bilayer; that stretch reads ILAVVVNCINLFGQVHFTILY. The Extracellular portion of the chain corresponds to 28–52; that stretch reads ADLEADYINPIELCSKVNKLITPEA. Residues 53–73 form a helical membrane-spanning segment; the sequence is ALHGALSLLFLLNGYWFVFLL. Topologically, residues 74–111 are cytoplasmic; it reads NLPVLAYNLNKIYNKVQLLDATEIFRTLGKHKRESFLK. Residues 112–132 traverse the membrane as a helical segment; sequence LGFHLLMFFFYLYRMIMALIA. The Extracellular portion of the chain corresponds to 133–138; sequence ESGDDF.

The protein belongs to the cornichon family.

It localises to the endoplasmic reticulum membrane. The protein resides in the golgi apparatus membrane. Could regulate export of the bud site and axial growth sites selection protein AXL2 and possibly other secretory proteins from the endoplasmic reticulum in COPII-coated vesicles. Seems to be required for axial budding pattern in haploid cells. The polypeptide is ER-derived vesicles protein ERV14 (ERV14) (Saccharomyces cerevisiae (strain ATCC 204508 / S288c) (Baker's yeast)).